Reading from the N-terminus, the 396-residue chain is Elongation factor Tu (396 aa).

In terms of domain architecture, tr-type G spans 10-206 (KLHVNVGTIG…ALDTHIPNPE (197 aa)). The segment at 19–26 (GHVDHGKT) is G1. 19–26 (GHVDHGKT) contacts GTP. T26 lines the Mg(2+) pocket. The G2 stretch occupies residues 60–64 (GITIS). Residues 81–84 (DCPG) form a G3 region. Residues 81 to 85 (DCPGH) and 136 to 139 (NKAD) contribute to the GTP site. Residues 136-139 (NKAD) form a G4 region. Residues 174–176 (SAL) are G5.

This sequence belongs to the TRAFAC class translation factor GTPase superfamily. Classic translation factor GTPase family. EF-Tu/EF-1A subfamily. In terms of assembly, monomer.

It is found in the cytoplasm. It carries out the reaction GTP + H2O = GDP + phosphate + H(+). Its function is as follows. GTP hydrolase that promotes the GTP-dependent binding of aminoacyl-tRNA to the A-site of ribosomes during protein biosynthesis. The chain is Elongation factor Tu from Xylella fastidiosa (strain Temecula1 / ATCC 700964).